The following is a 177-amino-acid chain: MIKMELKEAKYLGGIGAVLNLVSYAVGGILAIAGYVLILLALNKISKIFNDDEVFKKYLYGVVLWIIAVLIVIFAVGISFVSLSFIPLDYGLTAMSSFLVGVILFYILSVIGGYFIKKSYEKVSYYTGVDSFRICGLLYFIGTLLLIVIVGIIVIIVAQILEIVAYFSLPDDLKSEN.

Transmembrane regions (helical) follow at residues 20–42 (NLVS…LLAL), 62–84 (VVLW…VSLS), 94–116 (AMSS…GYFI), and 136–158 (GLLY…IIVA).

It localises to the cell membrane. This is an uncharacterized protein from Methanocaldococcus jannaschii (strain ATCC 43067 / DSM 2661 / JAL-1 / JCM 10045 / NBRC 100440) (Methanococcus jannaschii).